Consider the following 676-residue polypeptide: Methionine--tRNA ligase (676 aa).

Positions Pro15–His25 match the 'HIGH' region motif. Residues Cys146, Cys149, Cys159, and Cys162 each coordinate Zn(2+). The 'KMSKS' region signature appears at Lys332–Ser336. Lys335 provides a ligand contact to ATP. The 103-residue stretch at Asp574–Lys676 folds into the tRNA-binding domain.

It belongs to the class-I aminoacyl-tRNA synthetase family. MetG type 1 subfamily. In terms of assembly, homodimer. Zn(2+) serves as cofactor.

The protein resides in the cytoplasm. The catalysed reaction is tRNA(Met) + L-methionine + ATP = L-methionyl-tRNA(Met) + AMP + diphosphate. Functionally, is required not only for elongation of protein synthesis but also for the initiation of all mRNA translation through initiator tRNA(fMet) aminoacylation. The sequence is that of Methionine--tRNA ligase from Pectobacterium atrosepticum (strain SCRI 1043 / ATCC BAA-672) (Erwinia carotovora subsp. atroseptica).